We begin with the raw amino-acid sequence, 300 residues long: NAD kinase (300 aa).

The active-site Proton acceptor is D75. NAD(+)-binding positions include 75 to 76, 149 to 150, R177, D179, 190 to 195, A214, and Q248; these read DG, ND, and TAYALS.

The protein belongs to the NAD kinase family. It depends on a divalent metal cation as a cofactor.

Its subcellular location is the cytoplasm. The catalysed reaction is NAD(+) + ATP = ADP + NADP(+) + H(+). Functionally, involved in the regulation of the intracellular balance of NAD and NADP, and is a key enzyme in the biosynthesis of NADP. Catalyzes specifically the phosphorylation on 2'-hydroxyl of the adenosine moiety of NAD to yield NADP. The chain is NAD kinase from Burkholderia pseudomallei (strain K96243).